The primary structure comprises 286 residues: L-cysteine S-thiosulfotransferase subunit SoxA (286 aa).

The N-terminal stretch at M1–A28 is a signal peptide. A disulfide bridge connects residues C106 and C137. Positions D180–K286 constitute a Cytochrome c domain. Heme-binding residues include C200 and H204. R243 contributes to the substrate binding site. Heme is bound at residue C247. C247 (cysteine persulfide intermediate) is an active-site residue.

The protein belongs to the SoxA family. As to quaternary structure, heterodimer of SoxA and SoxX. The SoxAX complex interacts with CT1020, SoxAX-binding protein SaxB (SoxK); this interaction stimulates catalytic activity of the complex. Heme serves as cofactor. Cysteine persulfide at Cys-247.

The protein resides in the periplasm. The catalysed reaction is L-cysteinyl-[SoxY protein] + thiosulfate + 2 Fe(III)-[cytochrome c] = S-sulfosulfanyl-L-cysteinyl-[SoxY protein] + 2 Fe(II)-[cytochrome c] + 2 H(+). It catalyses the reaction S-sulfanyl-L-cysteinyl-[SoxY protein] + thiosulfate + 2 Fe(III)-[cytochrome c] = S-(2-sulfodisulfanyl)-L-cysteinyl-[SoxY protein] + 2 Fe(II)-[cytochrome c] + 2 H(+). In terms of biological role, C-type monoheme cytochrome, which is part of the SoxAX cytochrome complex involved in sulfur oxidation. The SoxAX complex catalyzes the formation of a heterodisulfide bond between the conserved cysteine residue on a sulfur carrier SoxYZ complex subunit SoxY and thiosulfate or other inorganic sulfur substrates. This leads to the liberation of two electrons, which may be transferred from the SoxAX complex to another cytochrome c and which then may be used for reductive CO(2) fixation. The protein is L-cysteine S-thiosulfotransferase subunit SoxA of Chlorobaculum thiosulfatiphilum (Chlorobium limicola f.sp. thiosulfatophilum).